The sequence spans 111 residues: Large ribosomal subunit protein uL24 (111 aa).

The protein belongs to the universal ribosomal protein uL24 family. As to quaternary structure, part of the 50S ribosomal subunit.

In terms of biological role, one of two assembly initiator proteins, it binds directly to the 5'-end of the 23S rRNA, where it nucleates assembly of the 50S subunit. One of the proteins that surrounds the polypeptide exit tunnel on the outside of the subunit. The sequence is that of Large ribosomal subunit protein uL24 from Myxococcus xanthus (strain DK1622).